Reading from the N-terminus, the 472-residue chain is 3beta,22alpha-dihydroxysteroid 3-dehydrogenase (472 aa).

The chain crosses the membrane as a helical span at residues 1-21 (MAFTAFLLLLSSIAAGFLLLL). Cys-418 lines the heme pocket.

The protein belongs to the cytochrome P450 family. The cofactor is heme.

The protein localises to the membrane. The catalysed reaction is (22S)-22-hydroxycampesterol + reduced [NADPH--hemoprotein reductase] + O2 = (22S)-22-hydroxycampest-4-en-3-one + oxidized [NADPH--hemoprotein reductase] + 2 H2O + H(+). The enzyme catalyses 6-deoxoteasterone + reduced [NADPH--hemoprotein reductase] + O2 = 3-dehydro-6-deoxoteasterone + oxidized [NADPH--hemoprotein reductase] + 2 H2O + H(+). It catalyses the reaction 6-deoxycathasterone + reduced [NADPH--hemoprotein reductase] + O2 = (22S,24R)-22-hydroxy-5alpha-ergostan-3-one + oxidized [NADPH--hemoprotein reductase] + 2 H2O + H(+). It carries out the reaction (22R,23R)-22,23-dihydroxycampesterol + reduced [NADPH--hemoprotein reductase] + O2 = (22R,23R)-22,23-dihydroxycampest-4-en-3-one + oxidized [NADPH--hemoprotein reductase] + 2 H2O + H(+). It participates in plant hormone biosynthesis; brassinosteroid biosynthesis. In terms of biological role, catalyzes C3-oxidation steps in brassinosteroids biosynthesis. Converts (22S)-22-hydroxycampesterol (22-OHCR) to (22S,24R)-22-hydroxyergost-4-en-3-one (22-hydroxy-campesta-4-en-3-one, 22-OH-4-en-3-one), 6-deoxocathasterone (6-deoxoCT) to (22S,24R)-22-hydroxy-5alpha-ergostan-3-one (22-hydroxy-campesta-3-one, 22-OH-3-one), (22R,23R)-22,23-dihydroxycampesterol (22,23-diOHCR) to (22R,23R)-22,23-dihydroxy-campest-4-en-3-one (22,23-diOH-4-en-3-one), and 6-deoxoteasterone (6-deoxoTE) to 3-dehydro-6-deoxoteasterone (6-deoxo3DT, 6-deoxo-3-DHT). In Arabidopsis thaliana (Mouse-ear cress), this protein is 3beta,22alpha-dihydroxysteroid 3-dehydrogenase.